A 1068-amino-acid chain; its full sequence is Carbamoyl phosphate synthase large chain (1068 aa).

The carboxyphosphate synthetic domain stretch occupies residues 1–401 (MPLNKDIKKV…AFLKGTRSLE (401 aa)). ATP-binding residues include R129, R169, G175, G176, K208, V210, E215, G241, I242, H243, Q284, and E298. Residues 133–327 (RNVMSRINEP…IAKVASKIAL (195 aa)) enclose the ATP-grasp 1 domain. The Mg(2+) site is built by Q284, E298, and N300. 3 residues coordinate Mn(2+): Q284, E298, and N300. Residues 402-549 (IGKYSLEHKK…YSTYDVYDEV (148 aa)) are oligomerization domain. The carbamoyl phosphate synthetic domain stretch occupies residues 550–932 (EVSKNKKVIV…ALYKGFIGAN (383 aa)). The ATP-grasp 2 domain maps to 674–864 (DELLEKLKIA…IVDIATRVML (191 aa)). 10 residues coordinate ATP: R710, K749, L751, E755, G780, V781, H782, S783, Q823, and E835. Positions 823, 835, and 837 each coordinate Mg(2+). 3 residues coordinate Mn(2+): Q823, E835, and N837. The MGS-like domain occupies 933–1068 (ISIKKEKGTV…ETLYIFDLSN (136 aa)). Residues 933 to 1068 (ISIKKEKGTV…ETLYIFDLSN (136 aa)) are allosteric domain.

It belongs to the CarB family. As to quaternary structure, composed of two chains; the small (or glutamine) chain promotes the hydrolysis of glutamine to ammonia, which is used by the large (or ammonia) chain to synthesize carbamoyl phosphate. Tetramer of heterodimers (alpha,beta)4. The cofactor is Mg(2+). Requires Mn(2+) as cofactor.

It carries out the reaction hydrogencarbonate + L-glutamine + 2 ATP + H2O = carbamoyl phosphate + L-glutamate + 2 ADP + phosphate + 2 H(+). The enzyme catalyses hydrogencarbonate + NH4(+) + 2 ATP = carbamoyl phosphate + 2 ADP + phosphate + 2 H(+). It participates in amino-acid biosynthesis; L-arginine biosynthesis; carbamoyl phosphate from bicarbonate: step 1/1. It functions in the pathway pyrimidine metabolism; UMP biosynthesis via de novo pathway; (S)-dihydroorotate from bicarbonate: step 1/3. Its function is as follows. Large subunit of the glutamine-dependent carbamoyl phosphate synthetase (CPSase). CPSase catalyzes the formation of carbamoyl phosphate from the ammonia moiety of glutamine, carbonate, and phosphate donated by ATP, constituting the first step of 2 biosynthetic pathways, one leading to arginine and/or urea and the other to pyrimidine nucleotides. The large subunit (synthetase) binds the substrates ammonia (free or transferred from glutamine from the small subunit), hydrogencarbonate and ATP and carries out an ATP-coupled ligase reaction, activating hydrogencarbonate by forming carboxy phosphate which reacts with ammonia to form carbamoyl phosphate. This Clostridium botulinum (strain Langeland / NCTC 10281 / Type F) protein is Carbamoyl phosphate synthase large chain.